A 377-amino-acid polypeptide reads, in one-letter code: Phospho-N-acetylmuramoyl-pentapeptide-transferase (377 aa).

10 helical membrane passes run 27–47 (TAFASLTALLIALLIGPYVIE), 71–91 (GTPTMGGVLICIAILLPTLLW), 94–114 (LSDPFVWIVMLSTLAFGAIGF), 139–159 (ILASAAIGVALVVLQGQGSYS), 182–202 (VPHLAYFAFIPFVIFVIIVIV), 216–236 (GLAIGCTIIAAGALTVLTYVS), 252–272 (MVGEVTIFCGAMVGASIGFLW), 280–300 (IFMGDVGSLALGGAIATVAVV), 305–325 (LLLPFIGGIFVLEALSVILQV), and 354–374 (KVIVRFWIAALVFALFALTTL).

This sequence belongs to the glycosyltransferase 4 family. MraY subfamily. Mg(2+) is required as a cofactor.

Its subcellular location is the cell inner membrane. It catalyses the reaction UDP-N-acetyl-alpha-D-muramoyl-L-alanyl-gamma-D-glutamyl-meso-2,6-diaminopimeloyl-D-alanyl-D-alanine + di-trans,octa-cis-undecaprenyl phosphate = di-trans,octa-cis-undecaprenyl diphospho-N-acetyl-alpha-D-muramoyl-L-alanyl-D-glutamyl-meso-2,6-diaminopimeloyl-D-alanyl-D-alanine + UMP. Its pathway is cell wall biogenesis; peptidoglycan biosynthesis. Functionally, catalyzes the initial step of the lipid cycle reactions in the biosynthesis of the cell wall peptidoglycan: transfers peptidoglycan precursor phospho-MurNAc-pentapeptide from UDP-MurNAc-pentapeptide onto the lipid carrier undecaprenyl phosphate, yielding undecaprenyl-pyrophosphoryl-MurNAc-pentapeptide, known as lipid I. The chain is Phospho-N-acetylmuramoyl-pentapeptide-transferase from Acidobacterium capsulatum (strain ATCC 51196 / DSM 11244 / BCRC 80197 / JCM 7670 / NBRC 15755 / NCIMB 13165 / 161).